A 385-amino-acid chain; its full sequence is Trans-enoyl reductase tasC (385 aa).

Residue 49-52 (VDTK) coordinates NADP(+). 136–143 (NSWYTVAW) lines the substrate pocket. NADP(+) contacts are provided by residues 196 to 199 (SSST), 219 to 222 (SARN), and 284 to 285 (LD). Residue 305-309 (GPELM) coordinates substrate. 374–375 (VS) provides a ligand contact to NADP(+).

The protein belongs to the zinc-containing alcohol dehydrogenase family. In terms of assembly, monomer.

The catalysed reaction is (2S,4S)-4-hydroxy-4-methylglutamate + 8 malonyl-CoA + 3 S-adenosyl-L-methionine + ATP + 8 NADPH + 11 H(+) = (2S)-3-[(2S)-3,5-dioxo-4-[(2E,4R,6R,8E,10E,12E)-4,6,12-trimethyltetradeca-2,8,10,12-tetraenoyl]pyrrolidin-2-yl]-2-hydroxy-2-methylpropanoate + AMP + 3 S-adenosyl-L-homocysteine + 8 CO2 + diphosphate + 8 NADP(+) + 8 CoA + 6 H2O. It carries out the reaction (2S,4R)-4-hydroxy-4-methylglutamate + 8 malonyl-CoA + 3 S-adenosyl-L-methionine + ATP + 8 NADPH + 11 H(+) = (2R)-3-[(2S)-3,5-dioxo-4-[(2E,4R,6R,8E,10E,12E)-4,6,12-trimethyltetradeca-2,8,10,12-tetraenoyl]pyrrolidin-2-yl]-2-hydroxy-2-methylpropanoate + AMP + 3 S-adenosyl-L-homocysteine + 8 CO2 + diphosphate + 8 NADP(+) + 8 CoA + 6 H2O. It participates in secondary metabolite biosynthesis. Its function is as follows. Trans-enoyl reductase; part of the gene cluster that mediates the biosynthesis of the tetramic acids Sch210971 and Sch210972, potential anti-HIV fungal natural product that contain a decalin core. The PKS module of tasS together with the enoylreductase tasC catalyze the formation of the polyketide unit which is then conjugated to 4-hydroxyl-4-methyl glutamate (HMG) by the condensation domain of the tasS NRPS module. One unique structural feature of Sch210971 and Sch210972 is the tetramic acid motif proposed to be derived from the non-proteinogenic amino acid HMG, by a Dieckmann-type condensation catalyzed by the reductase domain of tasS. The aldolase tasA catalyzes the aldol condensation of 2 molecules of pyruvic acid to yield the intermediate 4-hydroxyl-4-methyl-2-oxoglutarate (HMOG), which can then be stereoselectively transaminated, may be by tasG, to form HMG. The Diels-Alderase tas3 then uses the Dieckmann product of tasS as substrate and catalyzes the Diels-Alder cycloaddition to form the decalin ring of Sch210971 and Sch210972. The protein is Trans-enoyl reductase tasC of Hapsidospora irregularis.